A 263-amino-acid chain; its full sequence is MVALRLIPCLDVAKGRVVKGVNFVGLRDAGDPVELACRYSEAGADELVFLDIAASHEGRATLVDLVRRTAASVTIPFTVGGGIASVEGITELLRAGADKVSLNSSAVRRPELVSEGAERFGCQCIVVAIDARRRPGGGWDVYVKGGRENTGLDAVDWARRVAALGAGEILLTSMDGDGTQAGYDLALTRAVAQAVAVPVIASGGAGCMDHIAAALDSGPEGGQASAALLASLLHDGVLSVEQIKLDLQGRGLLIRPLEPESES.

Active-site residues include aspartate 11 and aspartate 130.

The protein belongs to the HisA/HisF family. Heterodimer of HisH and HisF.

It localises to the cytoplasm. It catalyses the reaction 5-[(5-phospho-1-deoxy-D-ribulos-1-ylimino)methylamino]-1-(5-phospho-beta-D-ribosyl)imidazole-4-carboxamide + L-glutamine = D-erythro-1-(imidazol-4-yl)glycerol 3-phosphate + 5-amino-1-(5-phospho-beta-D-ribosyl)imidazole-4-carboxamide + L-glutamate + H(+). It functions in the pathway amino-acid biosynthesis; L-histidine biosynthesis; L-histidine from 5-phospho-alpha-D-ribose 1-diphosphate: step 5/9. IGPS catalyzes the conversion of PRFAR and glutamine to IGP, AICAR and glutamate. The HisF subunit catalyzes the cyclization activity that produces IGP and AICAR from PRFAR using the ammonia provided by the HisH subunit. The polypeptide is Imidazole glycerol phosphate synthase subunit HisF (Synechococcus sp. (strain CC9311)).